Here is a 256-residue protein sequence, read N- to C-terminus: 14-3-3-like protein GF14-C (256 aa).

Belongs to the 14-3-3 family. May form a complex with the transcriptional activator VP1 and the bZIP transcription factor EMBP1. In terms of tissue distribution, expressed in seedlings, internodes and panicles.

The protein resides in the cytoplasm. It localises to the nucleus. Its function is as follows. Is associated with a DNA binding complex that binds to the G box, a well-characterized cis-acting DNA regulatory element found in plant genes. This is 14-3-3-like protein GF14-C (GF14C) from Oryza sativa subsp. japonica (Rice).